A 98-amino-acid polypeptide reads, in one-letter code: VQ motif-containing protein 1 (98 aa).

The short motif at 27 to 36 (FKTIVQELTG) is the VQ element.

In terms of assembly, interacts with WRKY33.

The protein localises to the nucleus. May modulate WRKY transcription factor activities. This Arabidopsis thaliana (Mouse-ear cress) protein is VQ motif-containing protein 1.